The primary structure comprises 186 residues: Ribosome-recycling factor (186 aa).

Belongs to the RRF family.

Its subcellular location is the cytoplasm. Functionally, responsible for the release of ribosomes from messenger RNA at the termination of protein biosynthesis. May increase the efficiency of translation by recycling ribosomes from one round of translation to another. The sequence is that of Ribosome-recycling factor from Albidiferax ferrireducens (strain ATCC BAA-621 / DSM 15236 / T118) (Rhodoferax ferrireducens).